The sequence spans 483 residues: UDP-N-acetylmuramoylalanine--D-glutamate ligase (483 aa).

Residue 119–125 (GTNGKTT) coordinates ATP.

It belongs to the MurCDEF family.

The protein resides in the cytoplasm. It catalyses the reaction UDP-N-acetyl-alpha-D-muramoyl-L-alanine + D-glutamate + ATP = UDP-N-acetyl-alpha-D-muramoyl-L-alanyl-D-glutamate + ADP + phosphate + H(+). It participates in cell wall biogenesis; peptidoglycan biosynthesis. Cell wall formation. Catalyzes the addition of glutamate to the nucleotide precursor UDP-N-acetylmuramoyl-L-alanine (UMA). This is UDP-N-acetylmuramoylalanine--D-glutamate ligase from Mycolicibacterium vanbaalenii (strain DSM 7251 / JCM 13017 / BCRC 16820 / KCTC 9966 / NRRL B-24157 / PYR-1) (Mycobacterium vanbaalenii).